A 276-amino-acid chain; its full sequence is Large ribosomal subunit protein uL2 (276 aa).

Basic and acidic residues predominate over residues 28 to 38; it reads RPEKSLTEKLS. Disordered regions lie at residues 28-57 and 219-276; these read RPEK…QGGG and TVRG…RRKK.

This sequence belongs to the universal ribosomal protein uL2 family. Part of the 50S ribosomal subunit. Forms a bridge to the 30S subunit in the 70S ribosome.

One of the primary rRNA binding proteins. Required for association of the 30S and 50S subunits to form the 70S ribosome, for tRNA binding and peptide bond formation. It has been suggested to have peptidyltransferase activity; this is somewhat controversial. Makes several contacts with the 16S rRNA in the 70S ribosome. The polypeptide is Large ribosomal subunit protein uL2 (Exiguobacterium sp. (strain ATCC BAA-1283 / AT1b)).